A 92-amino-acid chain; its full sequence is Small ribosomal subunit protein uS19 (92 aa).

This sequence belongs to the universal ribosomal protein uS19 family.

In terms of biological role, protein S19 forms a complex with S13 that binds strongly to the 16S ribosomal RNA. The sequence is that of Small ribosomal subunit protein uS19 from Aliivibrio fischeri (strain ATCC 700601 / ES114) (Vibrio fischeri).